We begin with the raw amino-acid sequence, 115 residues long: Large ribosomal subunit protein bL19 (115 aa).

It belongs to the bacterial ribosomal protein bL19 family.

Its function is as follows. This protein is located at the 30S-50S ribosomal subunit interface and may play a role in the structure and function of the aminoacyl-tRNA binding site. The polypeptide is Large ribosomal subunit protein bL19 (Baumannia cicadellinicola subsp. Homalodisca coagulata).